The primary structure comprises 621 residues: MPIRQLPEILINQIAAGEVVERPASVVKELVENAIDAGATRVDIELEAAGVRLIRIRDNGHGMAAQELPLAVLRHATSKIASLDDLEAVATLGFRGEALPSIASVSRFTLMSRRATDEHGAVLQIEGGTLGEVIPHAHAPGTTVEVRELFYNVPARRKFLRAERTELGHIEEWARSLALAHPDLELRLSHNGKLSRRYKPGDWYSDARLIEILGEDFAHQALRVDHSGAGLRLHGCIVQPHYSRLNADQQYLYVNGRPVRDRSVAHAVKQAYSDVLYQGRHPAYVLFLELDPARVDVNVHPAKHEVRFRDARLIHDFVYRTVQGTLAQTRAGTPPLAVGVGDVEGEGEGARPPGRHAVSFSGRRGGASHVLGSYSTSTAPLMQGVPSVSVADAPAAYAALYAAPPTQVMDAVPQMQTGLPLAAGAGDVPPLGYAIAQLHGIYILAECADGLIVVDMHAAHERIGYERLKRAHDGIGLRTQPLLVPMTLMVAEREADVAECEAETLASLGFEVTRSGPGSLQVRSIPALLSQAEPEMLLRDVLSDLSEHGHTRRVAEARDTLLATMACHGAVRAHRRLSISEMNALLRDMEATERSGQCNHGRPTWARFSLAEIDRWFLRGR.

Belongs to the DNA mismatch repair MutL/HexB family.

In terms of biological role, this protein is involved in the repair of mismatches in DNA. It is required for dam-dependent methyl-directed DNA mismatch repair. May act as a 'molecular matchmaker', a protein that promotes the formation of a stable complex between two or more DNA-binding proteins in an ATP-dependent manner without itself being part of a final effector complex. The polypeptide is DNA mismatch repair protein MutL (Xylella fastidiosa (strain M12)).